We begin with the raw amino-acid sequence, 596 residues long: Elongation factor 4 (596 aa).

The tr-type G domain maps to 2-183 (KNIRNFSIIA…EIIRRIPAPN (182 aa)). GTP is bound by residues 14–19 (DHGKST) and 130–133 (NKID).

The protein belongs to the TRAFAC class translation factor GTPase superfamily. Classic translation factor GTPase family. LepA subfamily.

Its subcellular location is the cell inner membrane. It carries out the reaction GTP + H2O = GDP + phosphate + H(+). Its function is as follows. Required for accurate and efficient protein synthesis under certain stress conditions. May act as a fidelity factor of the translation reaction, by catalyzing a one-codon backward translocation of tRNAs on improperly translocated ribosomes. Back-translocation proceeds from a post-translocation (POST) complex to a pre-translocation (PRE) complex, thus giving elongation factor G a second chance to translocate the tRNAs correctly. Binds to ribosomes in a GTP-dependent manner. The sequence is that of Elongation factor 4 from Wolinella succinogenes (strain ATCC 29543 / DSM 1740 / CCUG 13145 / JCM 31913 / LMG 7466 / NCTC 11488 / FDC 602W) (Vibrio succinogenes).